Here is a 302-residue protein sequence, read N- to C-terminus: Cell division protein FtsQ (302 aa).

The disordered stretch occupies residues 1–41; sequence MPAVVRGGPPKPRRPRAEAPASPSKGKPAPRKAQPAAKLHA. Residues 1 to 50 lie on the Cytoplasmic side of the membrane; it reads MPAVVRGGPPKPRRPRAEAPASPSKGKPAPRKAQPAAKLHAARGVGLSPT. The segment covering 18-38 has biased composition (low complexity); it reads EAPASPSKGKPAPRKAQPAAK. The helical transmembrane segment at 51–71 threads the bilayer; sequence VALSVAGAALGLGLVVMLATG. Residues 72–302 lie on the Periplasmic side of the membrane; it reads HRAERLGASM…LPGQPAADGA (231 aa). In terms of domain architecture, POTRA spans 94-162; sequence FRLKTVHIRG…DTVLIAVEER (69 aa).

This sequence belongs to the FtsQ/DivIB family. FtsQ subfamily.

Its subcellular location is the cell inner membrane. Its function is as follows. Essential cell division protein. The polypeptide is Cell division protein FtsQ (Caulobacter vibrioides (strain ATCC 19089 / CIP 103742 / CB 15) (Caulobacter crescentus)).